The following is a 333-amino-acid chain: Transaldolase (333 aa).

Lys-135 functions as the Schiff-base intermediate with substrate in the catalytic mechanism.

The protein belongs to the transaldolase family. Type 1 subfamily. As to quaternary structure, homodimer.

It localises to the cytoplasm. It carries out the reaction D-sedoheptulose 7-phosphate + D-glyceraldehyde 3-phosphate = D-erythrose 4-phosphate + beta-D-fructose 6-phosphate. It functions in the pathway carbohydrate degradation; pentose phosphate pathway; D-glyceraldehyde 3-phosphate and beta-D-fructose 6-phosphate from D-ribose 5-phosphate and D-xylulose 5-phosphate (non-oxidative stage): step 2/3. Its function is as follows. Transaldolase is important for the balance of metabolites in the pentose-phosphate pathway. This Prochlorococcus marinus (strain MIT 9312) protein is Transaldolase.